A 368-amino-acid polypeptide reads, in one-letter code: Protein RecA (368 aa).

Residue 80–87 (GPESSGKT) participates in ATP binding. Residues 344–353 (NPTFTATPDS) are compositionally biased toward polar residues. The interval 344-368 (NPTFTATPDSENADNADDEFSEEEL) is disordered. The segment covering 354–368 (ENADNADDEFSEEEL) has biased composition (acidic residues).

Belongs to the RecA family.

It is found in the cytoplasm. Functionally, can catalyze the hydrolysis of ATP in the presence of single-stranded DNA, the ATP-dependent uptake of single-stranded DNA by duplex DNA, and the ATP-dependent hybridization of homologous single-stranded DNAs. It interacts with LexA causing its activation and leading to its autocatalytic cleavage. The protein is Protein RecA of Mannheimia haemolytica (Pasteurella haemolytica).